We begin with the raw amino-acid sequence, 182 residues long: Protein YIPF6 homolog (182 aa).

At 1–45 the chain is on the cytoplasmic side; it reads MIESENPNTLDEPVIQTILRDLKMIGFKLYHVILPRGNAANVLRD. Residues 46 to 66 traverse the membrane as a helical segment; sequence WDLWGPLILCLVMAIFLSISA. Residues 67–70 lie on the Lumenal side of the membrane; sequence EEQK. The helical transmembrane segment at 71-91 threads the bilayer; it reads ALEFTIVFVVVWCGAAIVTVN. Topologically, residues 92–104 are cytoplasmic; it reads GQLLCGNISFFQS. The helical transmembrane segment at 105 to 125 threads the bilayer; that stretch reads VCILGYCIFPLTIATIIIWII. Topologically, residues 126-133 are lumenal; the sequence is QNFTMIVK. A helical transmembrane segment spans residues 134–154; the sequence is LPIVGGAWFWSSFASYGFLGS. Over 155–161 the chain is Cytoplasmic; sequence SVPESRR. Residues 162–182 traverse the membrane as a helical segment; the sequence is LLAVYPVLLFYLVIAWLVVVQ.

This sequence belongs to the YIP1 family.

The protein resides in the golgi apparatus membrane. The sequence is that of Protein YIPF6 homolog (yipf6) from Dictyostelium discoideum (Social amoeba).